The primary structure comprises 227 residues: Ribosomal RNA small subunit methyltransferase G (227 aa).

S-adenosyl-L-methionine is bound by residues Gly69, Phe74, 119-120 (VE), and Arg134.

The protein belongs to the methyltransferase superfamily. RNA methyltransferase RsmG family.

It localises to the cytoplasm. Specifically methylates the N7 position of a guanine in 16S rRNA. The protein is Ribosomal RNA small subunit methyltransferase G of Mycoplasmopsis pulmonis (strain UAB CTIP) (Mycoplasma pulmonis).